We begin with the raw amino-acid sequence, 363 residues long: MLYKSGEKRKGLLMSGCLYRIYGVGFSLGFFIALQIICGVCLAWLFFSCFICSNWYFVLFLWDFDLGFVIRSVHICFTSLLYLLLYIHIFKSITLIILFDTHILVWFIGFILFVFIIIIAFIGYVLPCTMMSYWGLTVFSNIIATVPILGIWLCYWIWGSEFINDFTLLKLHVLHVLLPFILLIILILHLFCLHYFMSSDAFCDRFAFYCERLSFCMWFYLRDMFLAFSILLCMMYVIFINWYFVFHEESWVIVDTLKTSDKILPEWFFLYLFGFLKAIPDKFMGLFLMVILLFSLFLFILNCILWFVYCRSSLLWLTYSLILFYSIWMSGFLALYVVLAYPIWMELQYWVLLLFLLIVCRLD.

4 consecutive transmembrane segments (helical) span residues 24 to 44 (VGFS…CLAW), 68 to 90 (FVIR…IHIF), 105 to 125 (VWFI…IGYV), and 171 to 191 (LHVL…LHLF). The heme b site is built by His74 and His88. Heme b-binding residues include His175 and His189. His194 serves as a coordination point for a ubiquinone. Transmembrane regions (helical) follow at residues 219 to 239 (FYLR…YVIF), 287 to 307 (FLMV…ILWF), 321 to 341 (LILF…VLAY), and 342 to 362 (PIWM…VCRL).

It belongs to the cytochrome b family. In terms of assembly, the main subunits of complex b-c1 are: cytochrome b, cytochrome c1 and the Rieske protein. Requires heme b as cofactor.

The protein resides in the mitochondrion inner membrane. Its function is as follows. Component of the ubiquinol-cytochrome c reductase complex (complex III or cytochrome b-c1 complex) that is part of the mitochondrial respiratory chain. The b-c1 complex mediates electron transfer from ubiquinol to cytochrome c. Contributes to the generation of a proton gradient across the mitochondrial membrane that is then used for ATP synthesis. The protein is Cytochrome b (MT-CYB) of Trypanosoma brucei brucei.